Here is a 133-residue protein sequence, read N- to C-terminus: Acyl-CoA thioester hydrolase YciA (133 aa).

The HotDog ACOT-type domain maps to 8 to 123; that stretch reads PQGELVLRTL…LFIYVAVDPD (116 aa).

Belongs to the acyl coenzyme A hydrolase family.

Catalyzes the hydrolysis of the thioester bond in palmitoyl-CoA and malonyl-CoA. In Salmonella typhi, this protein is Acyl-CoA thioester hydrolase YciA (yciA).